A 53-amino-acid chain; its full sequence is uncharacterized protein (53 aa).

The helical transmembrane segment at 18–38 (FLFFIFYFLFFFIFFTVFGNL) threads the bilayer.

It localises to the membrane. This is an uncharacterized protein from Dictyostelium discoideum (Social amoeba).